The following is a 355-amino-acid chain: uncharacterized protein (355 aa).

The protein belongs to the ycf89 family.

The protein localises to the plastid. It is found in the chloroplast. This is an uncharacterized protein from Trieres chinensis (Marine centric diatom).